The following is a 165-amino-acid chain: 3-isopropylmalate dehydratase small subunit (165 aa).

This sequence belongs to the LeuD family. LeuD type 2 subfamily. As to quaternary structure, heterodimer of LeuC and LeuD.

The enzyme catalyses (2R,3S)-3-isopropylmalate = (2S)-2-isopropylmalate. It participates in amino-acid biosynthesis; L-leucine biosynthesis; L-leucine from 3-methyl-2-oxobutanoate: step 2/4. In terms of biological role, catalyzes the isomerization between 2-isopropylmalate and 3-isopropylmalate, via the formation of 2-isopropylmaleate. The protein is 3-isopropylmalate dehydratase small subunit of Saccharolobus islandicus (strain M.16.27) (Sulfolobus islandicus).